A 110-amino-acid chain; its full sequence is Dermcidin (110 aa).

Residues 1-19 (MRFMTLLFLTALAGALVCA) form the signal peptide. The interval 24 to 70 (AASAPGSGNPCHEASAAQKENAGEDPGLARQAPKPRKQRSSLLEKGL) is disordered. O-linked (Xyl...) (chondroitin sulfate) serine glycans are attached at residues serine 30 and serine 38. Residues 50-62 (GLARQAPKPRKQR) constitute a propeptide that is removed on maturation. A helical transmembrane segment spans residues 64 to 108 (SLLEKGLDGAKKAVGGLGKLGKDAVEDLESVGKGAVHDVKDVLDS). Glutamate 67 contributes to the Zn(2+) binding site. Lysine 68 carries the post-translational modification N6-acetyllysine. Residues aspartate 71, aspartate 86, aspartate 90, histidine 100, and aspartate 104 each contribute to the Zn(2+) site. Residue leucine 110 is a propeptide.

In terms of assembly, homohexamer. Mn(2+) serves as cofactor. Zn(2+) is required as a cofactor. In terms of tissue distribution, detected in urine (at protein level). Constitutively expressed in eccrine sweat gland cells (at protein level). Secreted into the sweat at a concentration of 1-10 micrograms/ml.

Its subcellular location is the secreted. The protein resides in the membrane. Functionally, found in sweat, has an antimicrobial activity during early bacterial colonization. The secreted peptide assembles into homohexameric complexes that can associate with and also insert into pathogen membranes. Once inserted in bacteria membranes forms anion channels probably altering the transmembrane potential essential for bacterial survival. Highly effective against E.coli, E.faecalis, S.aureus and C.albicans. Optimal pH and salt concentration resemble the conditions in sweat. Also exhibits proteolytic activity, cleaving on the C-terminal side of Arg and, to a lesser extent, Lys residues. In terms of biological role, promotes survival of neurons and displays phosphatase activity. It may bind IgG. This Homo sapiens (Human) protein is Dermcidin.